A 329-amino-acid polypeptide reads, in one-letter code: Ribosomal RNA small subunit methyltransferase C (329 aa).

This sequence belongs to the methyltransferase superfamily. RsmC family. Monomer.

The protein resides in the cytoplasm. The enzyme catalyses guanosine(1207) in 16S rRNA + S-adenosyl-L-methionine = N(2)-methylguanosine(1207) in 16S rRNA + S-adenosyl-L-homocysteine + H(+). Specifically methylates the guanine in position 1207 of 16S rRNA in the 30S particle. This Haemophilus ducreyi (strain 35000HP / ATCC 700724) protein is Ribosomal RNA small subunit methyltransferase C.